We begin with the raw amino-acid sequence, 873 residues long: MAKEQSGTKEHSPMMRQYLEVKERYPDYLLLFRVGDFYETFFDDAITVSTALNIVLTKRTADIPMAGFPYHASEGYIAKLIKKGYKVAVCDQVEDPADAKGIVRREITDIVTPGVTYSDKLLDDRHNNYLAGVAFLKEGKTLMAGVAFIDVTTAEFRITTLLPEELPHFLAGLHPSEILFSTQEKERTLLLKKSLPSETLISLLEPWMFSEEQSQTVLLRHFKTHSLKGFGIETAGGNRAALVAAGVILQYLEETRQNSLSYITRIGELHHTEFMSLDQQTKRNLEIISSMQDGSLSGSLLQVMDRTRNPMGARLLRRWLQRPLKKLTNIQERHNAVEELVENRTLRESVAEQLAAINDLERSLARIATLRTIPREVRQLGISLAAIPTLQALLSDVTAPRLQALTAALQPLPKLAEQIESAIDPDAGATMRDGGYIRAGYNEELDDLRSIASTAKDRLMQIQQEEREATAISSLKVSYNKVFGYYIEISRANSDKVPAYYEKKQTLVNAERYTIPALKEYEEKILHAEEKSLLLEAELFRNLCQQIATEAATVQANAALLAELDALCSFAECAVAFDYTKPTMHEGTTLSITAGRHPVLERLLGAEESYIPNDCHFDDKQTMLIITGPNMAGKSSYLRQIGLIVLLAQAGSFVPAESASLGVVDRIFTRVGASDNLTSGESTFLVEMNEAANILNNATERSLLLLDEIGRGTSTFDGMSIAWSMCEYIVHTIGAKTLFATHYHELAELEERLKGVVNYNATVVETAERVIFLRKIVRGATDNSYGIEVAKMAGMPNDVISRAREILAGLEKRDVEIPRQKAPKVNTMQISLFEETDNQLRNAVEAVDVNRLTPLEALLELQKLQEMARSGGY.

628-635 contacts ATP; it reads GPNMAGKS.

It belongs to the DNA mismatch repair MutS family.

This protein is involved in the repair of mismatches in DNA. It is possible that it carries out the mismatch recognition step. This protein has a weak ATPase activity. The polypeptide is DNA mismatch repair protein MutS (Chlorobium chlorochromatii (strain CaD3)).